A 223-amino-acid polypeptide reads, in one-letter code: tRNA (guanine-N(7)-)-methyltransferase (223 aa).

S-adenosyl-L-methionine-binding residues include Asp56, Asp81, Asp108, and Asp130. The active site involves Asp130. The substrate site is built by Lys134 and Asp166.

This sequence belongs to the class I-like SAM-binding methyltransferase superfamily. TrmB family.

The catalysed reaction is guanosine(46) in tRNA + S-adenosyl-L-methionine = N(7)-methylguanosine(46) in tRNA + S-adenosyl-L-homocysteine. It functions in the pathway tRNA modification; N(7)-methylguanine-tRNA biosynthesis. Functionally, catalyzes the formation of N(7)-methylguanine at position 46 (m7G46) in tRNA. In Rubrobacter xylanophilus (strain DSM 9941 / JCM 11954 / NBRC 16129 / PRD-1), this protein is tRNA (guanine-N(7)-)-methyltransferase.